Consider the following 332-residue polypeptide: Nuclear migration protein nudC (332 aa).

The segment at 122-161 (RQQLLDSAGGEPSASNRDGISKPIEKVDDESDKSELGKLM) is disordered. The CS domain maps to 168–259 (CTLENYTWTQ…NKMNWWSRLV (92 aa)).

This sequence belongs to the nudC family. Interacts with PCID2.

It localises to the cytoplasm. Functionally, chaperone protein with functions in nuclear localization and cytoplasmic mRNA trafficking. In postmitotic neurons, acts with nudE downstream of dar1 to ensure correct positioning of the nuclei in primary dendrites and as a consequence, is required for determining multipolar neuron morphology. Stabilizes PCID2 in the cytoplasm and thereby is required for promoting cytoplasmic mRNA trafficking. This chain is Nuclear migration protein nudC, found in Drosophila melanogaster (Fruit fly).